We begin with the raw amino-acid sequence, 75 residues long: UPF0352 protein YejL (75 aa).

This sequence belongs to the UPF0352 family.

This chain is UPF0352 protein YejL, found in Salmonella agona (strain SL483).